Reading from the N-terminus, the 788-residue chain is Endonuclease MutS2 (788 aa).

Gly334–Thr341 contacts ATP. Residues Leu713–Gln788 form the Smr domain.

The protein belongs to the DNA mismatch repair MutS family. MutS2 subfamily. Homodimer. Binds to stalled ribosomes, contacting rRNA.

In terms of biological role, endonuclease that is involved in the suppression of homologous recombination and thus may have a key role in the control of bacterial genetic diversity. Functionally, acts as a ribosome collision sensor, splitting the ribosome into its 2 subunits. Detects stalled/collided 70S ribosomes which it binds and splits by an ATP-hydrolysis driven conformational change. Acts upstream of the ribosome quality control system (RQC), a ribosome-associated complex that mediates the extraction of incompletely synthesized nascent chains from stalled ribosomes and their subsequent degradation. Probably generates substrates for RQC. The protein is Endonuclease MutS2 of Enterococcus faecalis (strain ATCC 700802 / V583).